The following is a 361-amino-acid chain: MSAAFDPSAYDAQLQAKVTRLRELLAPFGAPQPAVFDSPREHYRLRAEFRLWREDGQRHYAMFAPGEKHKAILIDDFPIASERINALMPRLKAAWQASDELSNRLFQVEFLTTLAGDAMVTMCYHRPLDDAWEVAARQLAEELGVSLIGRSKGKRLVIGRDYAVEKLDVAGRVFSYRQPEGAFTQPNGAVNQKMLSWAYDAIGERDDDLLELYCGNGNFTLPLATRVRQVLATEISKTSVNAALSNLSENAVDNVRLVRLSAEELTQALNEVRPFRRLEGIDLKSYAFGTVFVDPPRAGMDPDTCELTRRFERILYISCNPETLAQNISQLQDTHRIERCALFDQFPYTHHMESGVLLVRR.

Positions 185, 213, 218, 234, and 294 each coordinate S-adenosyl-L-methionine. C319 (nucleophile) is an active-site residue. Residue E353 is the Proton acceptor of the active site.

The protein belongs to the class I-like SAM-binding methyltransferase superfamily. RNA M5U methyltransferase family. TrmA subfamily.

It catalyses the reaction uridine(54) in tRNA + S-adenosyl-L-methionine = 5-methyluridine(54) in tRNA + S-adenosyl-L-homocysteine + H(+). It carries out the reaction uridine(341) in tmRNA + S-adenosyl-L-methionine = 5-methyluridine(341) in tmRNA + S-adenosyl-L-homocysteine + H(+). Dual-specificity methyltransferase that catalyzes the formation of 5-methyluridine at position 54 (m5U54) in all tRNAs, and that of position 341 (m5U341) in tmRNA (transfer-mRNA). The protein is tRNA/tmRNA (uracil-C(5))-methyltransferase of Pseudomonas putida (strain W619).